A 635-amino-acid chain; its full sequence is MSHTPTPAAGSGHAPANGHMALVIGAIGVVFGDIGTSPLYTLKEAFSPHYGLTSDHDTVLGVLSLAFWALMITVTLKYVTIIMRADNEGEGGIMALMALTQRTLKQGSRSAYVVGILGIFGASLFFGDGVITPAISVMGAVEGLEIAAPSLHPFIVPITVVVLLVVFMVQRFGTEKVGKVFGPITCLWFLSLGAIGIWNIVDAPEVLKAFNPWWAIRFFMEHGWHGVFILGAVVLAVTGGEALYADMGHFGARPIRHGWYFFVLPMLLLNYLGQGALVLNHPAALKNPFFEAVPSWALYPMIILATLAAVIASQAVITGAYSVARQAMQLGYIPRMLIKHTSRDTIGQIYVPGINWLLMVMVIALVLIFRSSTNLAVAYGISVSMTMLIDTLLLALVARSLWPRWRNWVLPLCVVFFIIELAFVIANGAKLLQGAWFPLALGIVVFTLMRTWRRGRALLREEIRKDGIRIDSFLPGLMLAPPARVPGMAVFLTADPMVVPHALMHNLKHNKVLHERNIFLNVDTLPIPYAPADKRLQIESIGDEFYRVYVRFGFMETPDVPLALMRSCDQGGIHFDPMDTTFFASRETIVASANRGMPIWRDKLFALMHRNAAPATGFFRIPGNRLVELGAQVEI.

The next 12 membrane-spanning stretches (helical) occupy residues 20-40 (MALV…SPLY), 62-82 (VLSL…VTII), 111-131 (AYVV…DGVI), 149-169 (PSLH…VFMV), 180-200 (VFGP…IWNI), 223-243 (GWHG…GEAL), 259-279 (WYFF…ALVL), 292-312 (AVPS…AVIA), 349-369 (IYVP…VLIF), 377-397 (VAYG…LALV), 408-428 (WVLP…IANG), and 429-449 (AKLL…FTLM).

It belongs to the HAK/KUP transporter (TC 2.A.72) family.

It is found in the cell inner membrane. It carries out the reaction K(+)(in) + H(+)(in) = K(+)(out) + H(+)(out). Functionally, transport of potassium into the cell. Likely operates as a K(+):H(+) symporter. The sequence is that of Probable potassium transport system protein Kup from Xanthomonas campestris pv. campestris (strain 8004).